The primary structure comprises 288 residues: Eukaryotic translation initiation factor 3 subunit F-2 (288 aa).

One can recognise an MPN domain in the interval 12–149 (VLLHPLVLFQ…TRIFCAVATG (138 aa)).

Belongs to the eIF-3 subunit F family. Component of the eukaryotic translation initiation factor 3 (eIF-3) complex. The eIF-3 complex interacts with pix.

It localises to the cytoplasm. In terms of biological role, component of the eukaryotic translation initiation factor 3 (eIF-3) complex, which is involved in protein synthesis of a specialized repertoire of mRNAs and, together with other initiation factors, stimulates binding of mRNA and methionyl-tRNAi to the 40S ribosome. The eIF-3 complex specifically targets and initiates translation of a subset of mRNAs involved in cell proliferation. In Drosophila persimilis (Fruit fly), this protein is Eukaryotic translation initiation factor 3 subunit F-2.